Here is a 138-residue protein sequence, read N- to C-terminus: Small ribosomal subunit protein uS11c (138 aa).

Positions M1–G22 are disordered. Over residues G9–G22 the composition is skewed to basic residues.

Belongs to the universal ribosomal protein uS11 family. As to quaternary structure, part of the 30S ribosomal subunit.

It localises to the plastid. Its subcellular location is the chloroplast. This chain is Small ribosomal subunit protein uS11c, found in Piper cenocladum (Ant piper).